The chain runs to 346 residues: Short-chain dehydrogenase/reductase bet4 (346 aa).

Positions Met-1 to Thr-35 are disordered. Val-56, Lys-80, Asp-105, and Asn-132 together coordinate NADP(+). Ser-191 (proton donor) is an active-site residue. NADP(+)-binding residues include Tyr-222 and Lys-226. Tyr-222 (proton acceptor) is an active-site residue. Lys-226 (lowers pKa of active site Tyr) is an active-site residue.

It belongs to the short-chain dehydrogenases/reductases (SDR) family.

The catalysed reaction is dehydroprobetaenone I + AH2 = probetaenone I + A. It participates in mycotoxin biosynthesis. In terms of biological role, short-chain dehydrogenase/reductase; part of the gene cluster that mediates the biosynthesis of betaenones, phytotoxic polyketides involved in leaf spot disease in sugar beets. The first step of the pathway is the synthesis of dehydroprobetaenone I by the polyketide synthase bet1 and the enoyl reductase bet3 via condensation of one acetyl-CoA starter unit with 7 malonyl-CoA units and 5 methylations. The C-terminal reductase (R) domain of bet1 catalyzes the reductive release of the polyketide chain. Because bet1 lacks a designated enoylreductase (ER) domain, the required activity is provided the enoyl reductase bet3. The short-chain dehydrogenase/reductase bet4 then catalyzes reduction of dehydroprobetaenone I to probetaenone I. The cytochrome P450 monooxygenase bet2 catalyzes successive epoxidation, oxidation (resulting from epoxide opening) and hydroxylation to install a tertiary alcohol in the decaline ring to yield betaenone C from dehydroprobetaenone I and betaenone B from probetaenone I. The FAD-linked oxidoreductase (orf1) is probably responsible for the conversion of betaenone C to betaenone A via an intramolecular aldol reaction between C-1 and C-17 to form the bridged tricyclic system in betaenone A. The chain is Short-chain dehydrogenase/reductase bet4 from Neocamarosporium betae (Beet black rot fungus).